A 430-amino-acid chain; its full sequence is Divergent protein kinase domain 2A (430 aa).

The N-terminal stretch at 1 to 35 (MWRLVPPKLGRLSRSLKLAALGSLLVLMVLHSPSL) is a signal peptide.

It belongs to the DIPK family.

It localises to the cytoplasmic vesicle. The protein localises to the COPI-coated vesicle. The protein resides in the golgi apparatus. It is found in the secreted. Its function is as follows. May play a role in cardiomyocyte proliferation through paracrine signaling and activation of the PPI3K-AKT-CDK7 signaling cascade. In Homo sapiens (Human), this protein is Divergent protein kinase domain 2A.